A 528-amino-acid polypeptide reads, in one-letter code: MERLAARIMLLAGWRRALLAIASGAVGALALPPVGFFAALFFSFSMLVWLLDGVSGNPDRSWSRGLRSAFWIGWLFGFGYFVAGLWWLGNALMVEADEFAWALPLAVLGLPAVLAVFYGLACLAARLLWSEGLGRIAALAAMFGITEWLRSFIATGFPWNAIGYGAMPIPLMMQSAAVLGLFGVSALAVFVFAAPALLGTRRGAKLGLALAGILFCGHLGYGAYRLSLPEPDGRKVTVRLVQPNIDQAAKMDDTDRVAIFEKHLRLTAVPTPADQPRPDVIVWPETTIPFILTENPDALRQIAGALQEGQVLITGTVRSEDQGAGIAPRYYNSIYAIDSQGQILAAADKVHLVPFGEYVPWQDILSKLGITNIIDLPGGFSQGASRSLMTLPGGLKLYPLICYEVIFPDEMVKGLSGANAIINVTNDAWFGDTPGPFQHFQQARLRAVETGLPIIRAANNGISALIDGRGRVFSGLRLNAEGVENATFTLSAAPETNVNHNKCNFWAVTALLLSAAVISRLGLISRVN.

Helical transmembrane passes span 8–28, 69–89, 99–119, 178–198, and 203–223; these read IMLLAGWRRALLAIASGAVGA, AFWIGWLFGFGYFVAGLWWLG, FAWALPLAVLGLPAVLAVFYG, VLGLFGVSALAVFVFAAPALL, and GAKLGLALAGILFCGHLGYGA. Residues 241 to 490 enclose the CN hydrolase domain; the sequence is VQPNIDQAAK…EGVENATFTL (250 aa). Glu-285 serves as the catalytic Proton acceptor. Lys-349 is a catalytic residue. The active-site Nucleophile is the Cys-402.

The protein belongs to the CN hydrolase family. Apolipoprotein N-acyltransferase subfamily.

It is found in the cell inner membrane. It catalyses the reaction N-terminal S-1,2-diacyl-sn-glyceryl-L-cysteinyl-[lipoprotein] + a glycerophospholipid = N-acyl-S-1,2-diacyl-sn-glyceryl-L-cysteinyl-[lipoprotein] + a 2-acyl-sn-glycero-3-phospholipid + H(+). It functions in the pathway protein modification; lipoprotein biosynthesis (N-acyl transfer). In terms of biological role, catalyzes the phospholipid dependent N-acylation of the N-terminal cysteine of apolipoprotein, the last step in lipoprotein maturation. This Allorhizobium ampelinum (strain ATCC BAA-846 / DSM 112012 / S4) (Agrobacterium vitis (strain S4)) protein is Apolipoprotein N-acyltransferase.